The following is a 610-amino-acid chain: Mitochondrial import receptor subunit TOM70 (610 aa).

Ala2 carries the post-translational modification N-acetylalanine. Residues 2 to 41 are Mitochondrial intermembrane-facing; sequence AASKPVEAAMAAAAAPASGNGVGSSGGTAAPGSGAGTLPR. The chain crosses the membrane as a helical span at residues 42–62; it reads WHVALAIGAPLLLGAGAMYLW. At 63–610 the chain is on the cytoplasmic side; that stretch reads SRRRRRREAG…KKYGLKPPTL (548 aa). Residues 69–109 are disordered; the sequence is REAGGRGDASGLKRNSERKTPEGRASPALGSGPDGSGDSLE. Arg74 is modified (omega-N-methylarginine). The segment covering 93–108 has biased composition (low complexity); it reads ASPALGSGPDGSGDSL. A phosphoserine mark is found at Ser94, Ser99, Ser104, Ser107, and Ser112. 2 TPR repeats span residues 116 to 149 and 155 to 188; these read AQAA…CPTE and STFY…NPKY. Lys187 is subject to N6-acetyllysine. Lys277 participates in a covalent cross-link: Glycyl lysine isopeptide (Lys-Gly) (interchain with G-Cter in SUMO2). 8 TPR repeats span residues 296-329, 331-364, 369-402, 403-436, 444-477, 478-511, 513-546, and 547-580; these read ENSG…QGKY, AEAL…KEAN, ANAL…DPMN, SDVY…RPKF, CFAL…FPRC, AEGY…EPDN, TTYV…DNKC, and DFAY…AKSE.

It belongs to the Tom70 family. Forms part of the preprotein translocase complex of the outer mitochondrial membrane (TOM complex) which consists of at least 7 different proteins (TOMM5, TOMM6, TOMM7, TOMM20, TOMM22, TOMM40 and TOMM70). Interacts with CAPN8. Interacts with TRADD, TRAF6 and STING. Interacts with MAVS. Interacts with HSPA8 and HSP90AA1; both interactions are required for preprotein mitochondrial import. The interaction with HSP90AA1 is direct and mediates the association of TOMM70 with IRF3 and TBK1. Upon mitochondrial depolarization, interacts with PINK1; the interaction is required for PINK1-TOM-TIM23 supercomplex formation which is critical for PINK1 stabilization at the outer mitochondrial membrane, kinase activation and downstream mitophagy.

It localises to the mitochondrion outer membrane. Acts as a receptor of the preprotein translocase complex of the outer mitochondrial membrane (TOM complex). Recognizes and mediates the translocation of mitochondrial preproteins from the cytosol into the mitochondria in a chaperone dependent manner. Mediates TBK1 and IRF3 activation induced by MAVS in response to Sendai virus infection and promotes host antiviral responses during virus infection. This Rattus norvegicus (Rat) protein is Mitochondrial import receptor subunit TOM70.